The following is a 265-amino-acid chain: Putative Tubby-like protein 4 (265 aa).

The 44-residue stretch at 1–44 (MPPELLRDVLMRIERSEDTWPSRKNVVSCVGVCKNWRQIFKEIV) folds into the F-box domain. Residues 228–250 (SYELKLALYFAKNSAILKKFVLR) form the FBD domain.

The protein belongs to the TUB family.

The polypeptide is Putative Tubby-like protein 4 (Arabidopsis thaliana (Mouse-ear cress)).